The chain runs to 508 residues: Protection of telomeres protein tpz1 (508 aa).

The tract at residues S2 to E223 is pot1-binding. Disordered regions lie at residues Q159–D178, V235–P269, and P282–R358. Polar residues predominate over residues S327–D347. A compositionally biased stretch (basic and acidic residues) spans S348–R358. The tract at residues T379–S508 is ccq1/poz1-binding.

As to quaternary structure, interacts with ccq1, pot1 and poz1.

The protein localises to the chromosome. The protein resides in the telomere. Its subcellular location is the nucleus. Telomeric DNA-binding protein that is required to protect the 3'-end telomeric overhang and involved in telomere length regulation. recruits poz1 and ccq1 to telomeres, regulating telomere length negatively and positively respectively. This chain is Protection of telomeres protein tpz1 (tpz1), found in Schizosaccharomyces pombe (strain 972 / ATCC 24843) (Fission yeast).